Reading from the N-terminus, the 590-residue chain is NADH-ubiquinone oxidoreductase chain 5 (590 aa).

Transmembrane regions (helical) follow at residues 1–21 (MNLI…MSIM), 31–51 (LMVL…NNEL), 77–97 (LLFT…SLWY), 104–124 (INKF…IITA), 130–150 (LFIG…WWHG), 167–187 (IGDI…SINM), 190–210 (LMIQ…AAAT), 230–250 (TPVS…FLLI), 261–281 (IMLT…AAAA), 314–336 (AFLH…GSYI), 355–375 (LPMT…MPFL), 398–418 (IMIT…IMLF), 439–461 (HPLA…STLQ), 466–486 (VTMP…GVLL), and 568–588 (MIKN…LFIM).

Belongs to the complex I subunit 5 family.

The protein localises to the mitochondrion inner membrane. The catalysed reaction is a ubiquinone + NADH + 5 H(+)(in) = a ubiquinol + NAD(+) + 4 H(+)(out). Functionally, core subunit of the mitochondrial membrane respiratory chain NADH dehydrogenase (Complex I) that is believed to belong to the minimal assembly required for catalysis. Complex I functions in the transfer of electrons from NADH to the respiratory chain. The immediate electron acceptor for the enzyme is believed to be ubiquinone. This chain is NADH-ubiquinone oxidoreductase chain 5 (MT-ND5), found in Lycodon semicarinatus (Ryukyu odd-tooth snake).